Here is a 256-residue protein sequence, read N- to C-terminus: Cytochrome c-type biogenesis protein CcmE homolog, mitochondrial (256 aa).

A mitochondrion-targeting transit peptide spans 1–57 (MAARLLFRRSSQILRSIQRNPQISSSFESPPCPIFHSLTTASPDPSRLSSLTFLRSL). A helical transmembrane segment spans residues 84–106 (LWTYALTFSCIAGFVVIVLNQFQ). 2 residues coordinate heme: His222 and Tyr226.

This sequence belongs to the CcmE/CycJ family.

It is found in the mitochondrion inner membrane. Its subcellular location is the mitochondrion intermembrane space. Functionally, heme-binding chaperone that may be involved in cytochrome c maturation in mitochondria. The polypeptide is Cytochrome c-type biogenesis protein CcmE homolog, mitochondrial (Arabidopsis thaliana (Mouse-ear cress)).